Reading from the N-terminus, the 189-residue chain is Vacuolar iron transporter homolog 2 (189 aa).

Residues 1–10 lie on the Cytoplasmic side of the membrane; that stretch reads MARAQWLRAA. The helical transmembrane segment at 11-31 threads the bilayer; the sequence is VLGANDGLVSVASLMIGIGAV. The Vacuolar portion of the chain corresponds to 32-38; it reads NENNKAM. The helical transmembrane segment at 39–59 threads the bilayer; it reads LVSGLAGLVAGACSMAIGEFV. Residues 60 to 97 are Cytoplasmic-facing; the sequence is SVYAQYDIEVTQIERDGDIDGADAAAAREKLPSPTQAA. A helical transmembrane segment spans residues 98-118; it reads FASALAFAIGGLLPLLTSGFI. Topologically, residues 119–124 are vacuolar; sequence KPWGPR. A helical membrane pass occupies residues 125–145; sequence VGVVCAASSVGLAGFGAAGGY. Residues 146–159 lie on the Cytoplasmic side of the membrane; it reads LGGANMVRSGTRVL. A helical transmembrane segment spans residues 160 to 180; sequence LGGWLAMLITYAVLRLFATIF. Residues 181–189 are Vacuolar-facing; it reads HGMNISSSA.

This sequence belongs to the CCC1 family.

It is found in the vacuole membrane. It catalyses the reaction Fe(2+)(in) = Fe(2+)(out). Functionally, probable vacuolar iron transporter that may be involved in the regulation of iron distribution throughout the plant. This chain is Vacuolar iron transporter homolog 2, found in Oryza sativa subsp. japonica (Rice).